The following is a 141-amino-acid chain: Pancreatic progenitor cell differentiation and proliferation factor-like protein (141 aa).

Residues 72-141 are disordered; it reads DQSACGGNGP…GAPKDTNSPQ (70 aa). The segment covering 95–105 has biased composition (low complexity); that stretch reads SLLQQEESQLL. Over residues 112-122 the composition is skewed to polar residues; sequence GTVNRFRNSQT.

Belongs to the PPDPF family.

The protein is Pancreatic progenitor cell differentiation and proliferation factor-like protein of Bos taurus (Bovine).